The following is an 89-amino-acid chain: Small ribosomal subunit protein uS15 (89 aa).

The protein belongs to the universal ribosomal protein uS15 family. Part of the 30S ribosomal subunit. Forms a bridge to the 50S subunit in the 70S ribosome, contacting the 23S rRNA.

One of the primary rRNA binding proteins, it binds directly to 16S rRNA where it helps nucleate assembly of the platform of the 30S subunit by binding and bridging several RNA helices of the 16S rRNA. Its function is as follows. Forms an intersubunit bridge (bridge B4) with the 23S rRNA of the 50S subunit in the ribosome. The polypeptide is Small ribosomal subunit protein uS15 (Buchnera aphidicola subsp. Cinara cedri (strain Cc)).